The primary structure comprises 337 residues: ADP-ribosylation factor GTPase-activating protein AGD12 (337 aa).

Residues 15–137 form the Arf-GAP domain; the sequence is KRRIRDLLTQ…EFLKPSLRIT (123 aa). The C4-type zinc finger occupies 30–53; that stretch reads CADCGAPDPKWASANIGVFICLKC. In terms of domain architecture, C2 spans 164-281; it reads TNSSSQQPQL…AMAFGDPEMF (118 aa). Residues Asp-250, Ser-253, and Asp-256 each contribute to the Ca(2+) site.

Ca(2+) serves as cofactor. Expressed in roots, leaves, flowers and siliques. Low levels of expression in seeds and stems.

It localises to the golgi apparatus. The protein localises to the cell membrane. In terms of biological role, GTPase-activating protein (GAP) for ADP ribosylation factor (ARF). Binds phosphatidylinositol 3-monophosohate (PI-3-P) and anionic phospholipids. The sequence is that of ADP-ribosylation factor GTPase-activating protein AGD12 (AGD12) from Arabidopsis thaliana (Mouse-ear cress).